Consider the following 360-residue polypeptide: Phospho-N-acetylmuramoyl-pentapeptide-transferase (360 aa).

10 consecutive transmembrane segments (helical) span residues 27–47 (GAFL…INVL), 69–89 (VGTP…STLM), 93–113 (WDNP…LIGF), 134–154 (LLLG…NHPA), 168–188 (VLLN…VGAA), 199–219 (GLAI…AYAV), 239–259 (ILIF…YNAP), 262–282 (AVFM…AIAI), 288–308 (LVLA…IIQV), and 337–357 (TIVI…LATL).

This sequence belongs to the glycosyltransferase 4 family. MraY subfamily. It depends on Mg(2+) as a cofactor.

It is found in the cell inner membrane. It carries out the reaction UDP-N-acetyl-alpha-D-muramoyl-L-alanyl-gamma-D-glutamyl-meso-2,6-diaminopimeloyl-D-alanyl-D-alanine + di-trans,octa-cis-undecaprenyl phosphate = di-trans,octa-cis-undecaprenyl diphospho-N-acetyl-alpha-D-muramoyl-L-alanyl-D-glutamyl-meso-2,6-diaminopimeloyl-D-alanyl-D-alanine + UMP. It functions in the pathway cell wall biogenesis; peptidoglycan biosynthesis. In terms of biological role, catalyzes the initial step of the lipid cycle reactions in the biosynthesis of the cell wall peptidoglycan: transfers peptidoglycan precursor phospho-MurNAc-pentapeptide from UDP-MurNAc-pentapeptide onto the lipid carrier undecaprenyl phosphate, yielding undecaprenyl-pyrophosphoryl-MurNAc-pentapeptide, known as lipid I. The protein is Phospho-N-acetylmuramoyl-pentapeptide-transferase of Ruegeria sp. (strain TM1040) (Silicibacter sp.).